The chain runs to 480 residues: UDP-glucose 6-dehydrogenase 2 (480 aa).

NAD(+) is bound by residues 8-13 (GAGYVG), Asp-33, Arg-38, 86-90 (VNTPT), 127-128 (ST), and Glu-161. Residues 157-161 (EFLAE), 216-223 (KLAANAFL), and 256-269 (RIGP…VGFG) each bind substrate. Cys-272 serves as the catalytic Nucleophile. Position 272–275 (272–275 (CFQK)) interacts with NAD(+). A substrate-binding site is contributed by 334–335 (FK). Arg-342 is an NAD(+) binding site. Arg-447 is a binding site for substrate.

It belongs to the UDP-glucose/GDP-mannose dehydrogenase family. As to expression, preferentially expressed in roots.

It carries out the reaction UDP-alpha-D-glucose + 2 NAD(+) + H2O = UDP-alpha-D-glucuronate + 2 NADH + 3 H(+). It participates in nucleotide-sugar biosynthesis; UDP-alpha-D-glucuronate biosynthesis; UDP-alpha-D-glucuronate from UDP-alpha-D-glucose: step 1/1. With respect to regulation, inhibited by UDP-xylose. Involved in the biosynthesis of UDP-glucuronic acid (UDP-GlcA), providing nucleotide sugars for cell-wall polymers. Required for the formation of cell wall ingrowths on the outer cell walls of nematode-induced syncytia. The sequence is that of UDP-glucose 6-dehydrogenase 2 (UGD2) from Arabidopsis thaliana (Mouse-ear cress).